The sequence spans 451 residues: Aminodeoxychorismate synthase component 1 (451 aa).

Residues Ser-34, 41 to 44 (HNRF), and 238 to 240 (PFS) each bind L-tryptophan. Glu-256 functions as the Proton donor in the catalytic mechanism. Lys-272 functions as the N6-(4-deoxychorismate)-lysine intermediate in the catalytic mechanism.

This sequence belongs to the anthranilate synthase component I family. In terms of assembly, monomer. Heterodimer consisting of two non-identical subunits: a glutamine amidotransferase subunit (PabA) and a aminodeoxychorismate synthase subunit (PabB). Mg(2+) serves as cofactor.

The enzyme catalyses chorismate + L-glutamine = 4-amino-4-deoxychorismate + L-glutamate. It functions in the pathway cofactor biosynthesis; tetrahydrofolate biosynthesis; 4-aminobenzoate from chorismate: step 1/2. Part of a heterodimeric complex that catalyzes the two-step biosynthesis of 4-amino-4-deoxychorismate (ADC), a precursor of p-aminobenzoate (PABA) and tetrahydrofolate. In the first step, a glutamine amidotransferase (PabA) generates ammonia as a substrate that, along with chorismate, is used in the second step, catalyzed by aminodeoxychorismate synthase (PabB) to produce ADC. The sequence is that of Aminodeoxychorismate synthase component 1 (pabB) from Klebsiella aerogenes (Enterobacter aerogenes).